The primary structure comprises 530 residues: Meiosis 1 arrest protein (530 aa).

Positions 463–530 are disordered; it reads LHPHWESRAP…SEWEKDPSRP (68 aa). Residues 503 to 516 are compositionally biased toward low complexity; sequence ASKMPAASKSSSDA.

It is found in the cytoplasm. Functionally, required for meiosis I progression during spermatogenesis. The chain is Meiosis 1 arrest protein (M1AP) from Homo sapiens (Human).